Here is a 292-residue protein sequence, read N- to C-terminus: MDQYNLNTREGRWKHFGSVDPIKGTKPTEKEKMTDLQSSKKDFLFEIDHVGIKNLTYPVRLDGYQTAGTFSLSTHLAKDEKGINMSRILESVEAHYDNGLSLDFDTLKTVLITLQTVMHQKDATVDVDAKWFFDRFSPVTNLRAIGHADTRFSMTVEGDTTVNKSLTLTAMVTTLCPCSKEISEYSAHNQRGIVTVKADFAPEGELPANFKERILEAMEVNASSMLYPILKRTDEKSVTERAYENPRFVEDLLRLIAADLVELDFVTGFTIECRNEESIHQHDAFARLSYNK.

It belongs to the GTP cyclohydrolase IV family.

The enzyme catalyses GTP + H2O = 7,8-dihydroneopterin 3'-triphosphate + formate + H(+). Its pathway is cofactor biosynthesis; 7,8-dihydroneopterin triphosphate biosynthesis; 7,8-dihydroneopterin triphosphate from GTP: step 1/1. In terms of biological role, converts GTP to 7,8-dihydroneopterin triphosphate. This is GTP cyclohydrolase FolE2 from Macrococcus caseolyticus (strain JCSC5402) (Macrococcoides caseolyticum).